The chain runs to 314 residues: Acetyl-coenzyme A carboxylase carboxyl transferase subunit beta, chloroplastic (314 aa).

A CoA carboxyltransferase N-terminal domain is found at 47–314 (LWTRCDNCEN…APWKEKNNQV (268 aa)). Zn(2+)-binding residues include C51, C54, C70, and C73. The C4-type zinc-finger motif lies at 51 to 73 (CDNCENMLYIKFLKQNKGVCEEC).

The protein belongs to the AccD/PCCB family. In terms of assembly, acetyl-CoA carboxylase is a heterohexamer composed of biotin carboxyl carrier protein, biotin carboxylase and 2 subunits each of ACCase subunit alpha and ACCase plastid-coded subunit beta (accD). It depends on Zn(2+) as a cofactor.

It localises to the plastid. The protein resides in the chloroplast stroma. It carries out the reaction N(6)-carboxybiotinyl-L-lysyl-[protein] + acetyl-CoA = N(6)-biotinyl-L-lysyl-[protein] + malonyl-CoA. It participates in lipid metabolism; malonyl-CoA biosynthesis; malonyl-CoA from acetyl-CoA: step 1/1. Component of the acetyl coenzyme A carboxylase (ACC) complex. Biotin carboxylase (BC) catalyzes the carboxylation of biotin on its carrier protein (BCCP) and then the CO(2) group is transferred by the transcarboxylase to acetyl-CoA to form malonyl-CoA. This chain is Acetyl-coenzyme A carboxylase carboxyl transferase subunit beta, chloroplastic, found in Angiopteris lygodiifolia (Turnip fern).